An 88-amino-acid chain; its full sequence is ATP synthase subunit c 2 (88 aa).

2 helical membrane-spanning segments follow: residues 4 to 24 and 53 to 73; these read FSWV…GTGI and IGLA…MIIL.

Belongs to the ATPase C chain family. In terms of assembly, F-type ATPases have 2 components, F(1) - the catalytic core - and F(0) - the membrane proton channel. F(1) has five subunits: alpha(3), beta(3), gamma(1), delta(1), epsilon(1). F(0) has three main subunits: a(1), b(2) and c(10-14). The alpha and beta chains form an alternating ring which encloses part of the gamma chain. F(1) is attached to F(0) by a central stalk formed by the gamma and epsilon chains, while a peripheral stalk is formed by the delta and b chains.

It localises to the cell inner membrane. Functionally, f(1)F(0) ATP synthase produces ATP from ADP in the presence of a proton or sodium gradient. F-type ATPases consist of two structural domains, F(1) containing the extramembraneous catalytic core and F(0) containing the membrane proton channel, linked together by a central stalk and a peripheral stalk. During catalysis, ATP synthesis in the catalytic domain of F(1) is coupled via a rotary mechanism of the central stalk subunits to proton translocation. Key component of the F(0) channel; it plays a direct role in translocation across the membrane. A homomeric c-ring of between 10-14 subunits forms the central stalk rotor element with the F(1) delta and epsilon subunits. This chain is ATP synthase subunit c 2, found in Syntrophotalea carbinolica (strain DSM 2380 / NBRC 103641 / GraBd1) (Pelobacter carbinolicus).